Here is a 489-residue protein sequence, read N- to C-terminus: Inactive receptor-like serine/threonine-protein kinase At2g40270 (489 aa).

The first 23 residues, 1 to 23 (MLFKMRSFVAFVLLLSWFGSCCS), serve as a signal peptide directing secretion. The Extracellular portion of the chain corresponds to 24–139 (LKDQAVDFLK…PRNSHSSVPL (116 aa)). The disordered stretch occupies residues 67–130 (KDLPSRKDRK…SAPLANSPIP (64 aa)). The span at 81–90 (AATTTPSSSP) shows a compositional bias: low complexity. The span at 99–116 (TKASTVSEPQKRSSTQDV) shows a compositional bias: polar residues. Residues 117–130 (SPSPSAPLANSPIP) show a composition bias toward low complexity. The chain crosses the membrane as a helical span at residues 140-160 (VVGCVGGAFFLLLVATGLYFF). Topologically, residues 161-489 (TSKAGKTVNP…WAELEVLSTA (329 aa)) are cytoplasmic. The Protein kinase domain occupies 200-460 (EDFSNVIGSC…PTMQEVTGWL (261 aa)).

Belongs to the protein kinase superfamily. Ser/Thr protein kinase family.

It is found in the cell membrane. This Arabidopsis thaliana (Mouse-ear cress) protein is Inactive receptor-like serine/threonine-protein kinase At2g40270.